The chain runs to 295 residues: Acetylglutamate kinase (295 aa).

Substrate is bound by residues 66 to 67, Arg88, and Asn193; that span reads GG.

It belongs to the acetylglutamate kinase family. ArgB subfamily.

It is found in the cytoplasm. It carries out the reaction N-acetyl-L-glutamate + ATP = N-acetyl-L-glutamyl 5-phosphate + ADP. The protein operates within amino-acid biosynthesis; L-arginine biosynthesis; N(2)-acetyl-L-ornithine from L-glutamate: step 2/4. Catalyzes the ATP-dependent phosphorylation of N-acetyl-L-glutamate. This Sinorhizobium medicae (strain WSM419) (Ensifer medicae) protein is Acetylglutamate kinase.